The primary structure comprises 106 residues: Trp operon repressor homolog (106 aa).

Residues 59 to 82 (QREIQQILNTSAATITRGSNMIKI) mediate DNA binding.

It belongs to the TrpR family. As to quaternary structure, homodimer.

The protein localises to the cytoplasm. This protein is an aporepressor. When complexed with L-tryptophan it binds the operator region of the trp operon and prevents the initiation of transcription. The protein is Trp operon repressor homolog of Histophilus somni (strain 2336) (Haemophilus somnus).